The chain runs to 243 residues: DNA repair protein RecO (243 aa).

The protein belongs to the RecO family.

Functionally, involved in DNA repair and RecF pathway recombination. In Vibrio parahaemolyticus serotype O3:K6 (strain RIMD 2210633), this protein is DNA repair protein RecO.